The sequence spans 143 residues: Ribonuclease HI (143 aa).

Residues 1–136 (MQEIEIFCDG…CNSLAKLEAQ (136 aa)) form the RNase H type-1 domain. The Mg(2+) site is built by Asp-9, Glu-47, Asp-69, and Asn-128.

This sequence belongs to the RNase H family. In terms of assembly, monomer. The cofactor is Mg(2+).

It localises to the cytoplasm. It carries out the reaction Endonucleolytic cleavage to 5'-phosphomonoester.. Endonuclease that specifically degrades the RNA of RNA-DNA hybrids. This chain is Ribonuclease HI (rnhA), found in Helicobacter pylori (strain J99 / ATCC 700824) (Campylobacter pylori J99).